Reading from the N-terminus, the 348-residue chain is Killer cell immunoglobulin-like receptor 2DL1 (348 aa).

The first 21 residues, 1–21, serve as a signal peptide directing secretion; sequence MSLLVVSMACVGFFLLQGAWP. The Extracellular segment spans residues 22-245; the sequence is HEGVHRKPSL…SKTGNPRHLH (224 aa). Ig-like C2-type domains are found at residues 42-107 and 142-205; these read EETV…VTHS and GENV…FHDS. Cys49 and Cys100 are disulfide-bonded. Asn67, Asn84, Asn144, and Asn178 each carry an N-linked (GlcNAc...) asparagine glycan. Cysteines 149 and 198 form a disulfide. Residues 220–239 form a disordered region; sequence VTGNPSNSWPSPTEPSSKTG. Residues 246–264 traverse the membrane as a helical segment; it reads ILIGTSVVIILFILLFFLL. Residues 265–348 are Cytoplasmic-facing; the sequence is HRWCSNKKNA…ESRSKVVSCP (84 aa).

Belongs to the immunoglobulin superfamily. As to quaternary structure, interacts with ARRB2. Interacts with PTPN6; the interaction is enhanced by ARRB2. Interacts with PTPN11; the interaction is enhanced by ARRB2. Expressed by NK cells.

The protein resides in the cell membrane. In terms of biological role, receptor on natural killer (NK) cells for some HLA-C alleles such as w4 and w6. Inhibits the activity of NK cells thus preventing cell lysis. This is Killer cell immunoglobulin-like receptor 2DL1 from Homo sapiens (Human).